Reading from the N-terminus, the 206-residue chain is Small ribosomal subunit protein uS4 (206 aa).

The S4 RNA-binding domain maps to 96–156; that stretch reads TRLDNVVYRM…EKSRTQARIK (61 aa).

Belongs to the universal ribosomal protein uS4 family. In terms of assembly, part of the 30S ribosomal subunit. Contacts protein S5. The interaction surface between S4 and S5 is involved in control of translational fidelity.

Its function is as follows. One of the primary rRNA binding proteins, it binds directly to 16S rRNA where it nucleates assembly of the body of the 30S subunit. With S5 and S12 plays an important role in translational accuracy. This Shewanella baltica (strain OS223) protein is Small ribosomal subunit protein uS4.